The chain runs to 157 residues: Transcriptional repressor NrdR (157 aa).

Residues 3-34 fold into a zinc finger; it reads CPFCGHAESQVKDSRPSEDGAAIRRRRMCPEC. The ATP-cone domain occupies 49–139; it reads LIIVKRSGRR…VYRDFKETSD (91 aa).

It belongs to the NrdR family. Requires Zn(2+) as cofactor.

Negatively regulates transcription of bacterial ribonucleotide reductase nrd genes and operons by binding to NrdR-boxes. The chain is Transcriptional repressor NrdR from Caulobacter vibrioides (strain ATCC 19089 / CIP 103742 / CB 15) (Caulobacter crescentus).